The following is a 127-amino-acid chain: Phosphoribosyl-AMP cyclohydrolase (127 aa).

Asp83 serves as a coordination point for Mg(2+). A Zn(2+)-binding site is contributed by Cys84. Positions 85 and 87 each coordinate Mg(2+). Residues Cys100 and Cys107 each contribute to the Zn(2+) site.

It belongs to the PRA-CH family. As to quaternary structure, homodimer. It depends on Mg(2+) as a cofactor. Zn(2+) serves as cofactor.

The protein localises to the cytoplasm. It catalyses the reaction 1-(5-phospho-beta-D-ribosyl)-5'-AMP + H2O = 1-(5-phospho-beta-D-ribosyl)-5-[(5-phospho-beta-D-ribosylamino)methylideneamino]imidazole-4-carboxamide. It participates in amino-acid biosynthesis; L-histidine biosynthesis; L-histidine from 5-phospho-alpha-D-ribose 1-diphosphate: step 3/9. In terms of biological role, catalyzes the hydrolysis of the adenine ring of phosphoribosyl-AMP. The polypeptide is Phosphoribosyl-AMP cyclohydrolase (Methanocaldococcus jannaschii (strain ATCC 43067 / DSM 2661 / JAL-1 / JCM 10045 / NBRC 100440) (Methanococcus jannaschii)).